The chain runs to 725 residues: Phosphoribosylformylglycinamidine synthase subunit PurL (725 aa).

The active site involves His-34. Tyr-37 lines the ATP pocket. Residue Glu-93 participates in Mg(2+) binding. Residues 94-97 (SHNH) and Arg-116 contribute to the substrate site. His-95 (proton acceptor) is an active-site residue. Asp-117 provides a ligand contact to Mg(2+). Positions 220–241 (GASFASEDLSEDAETEDRPAVQ) are disordered. Gln-241 serves as a coordination point for substrate. A Mg(2+)-binding site is contributed by Asp-269. 313–315 (ESQ) contributes to the substrate binding site. ATP-binding residues include Asp-489 and Gly-526. Position 527 (Asn-527) interacts with Mg(2+). Substrate is bound at residue Ser-529.

It belongs to the FGAMS family. As to quaternary structure, monomer. Part of the FGAM synthase complex composed of 1 PurL, 1 PurQ and 2 PurS subunits.

The protein resides in the cytoplasm. It carries out the reaction N(2)-formyl-N(1)-(5-phospho-beta-D-ribosyl)glycinamide + L-glutamine + ATP + H2O = 2-formamido-N(1)-(5-O-phospho-beta-D-ribosyl)acetamidine + L-glutamate + ADP + phosphate + H(+). Its pathway is purine metabolism; IMP biosynthesis via de novo pathway; 5-amino-1-(5-phospho-D-ribosyl)imidazole from N(2)-formyl-N(1)-(5-phospho-D-ribosyl)glycinamide: step 1/2. Part of the phosphoribosylformylglycinamidine synthase complex involved in the purines biosynthetic pathway. Catalyzes the ATP-dependent conversion of formylglycinamide ribonucleotide (FGAR) and glutamine to yield formylglycinamidine ribonucleotide (FGAM) and glutamate. The FGAM synthase complex is composed of three subunits. PurQ produces an ammonia molecule by converting glutamine to glutamate. PurL transfers the ammonia molecule to FGAR to form FGAM in an ATP-dependent manner. PurS interacts with PurQ and PurL and is thought to assist in the transfer of the ammonia molecule from PurQ to PurL. The chain is Phosphoribosylformylglycinamidine synthase subunit PurL from Haloquadratum walsbyi (strain DSM 16790 / HBSQ001).